The following is a 129-amino-acid chain: Small ribosomal subunit protein uS9 (129 aa).

The protein belongs to the universal ribosomal protein uS9 family.

This chain is Small ribosomal subunit protein uS9, found in Chlorobium chlorochromatii (strain CaD3).